We begin with the raw amino-acid sequence, 447 residues long: MVLREQEHEPFFIKIDGKWCQIDDAVLRSHPGGSAITTYKNMDATTVFHTFHTGSKEAYQWLTELKKECPTQEPEIPDIKDDPIKGIDDVNMGTFNISEKRSAQINKSFTDLRMRVRAEGLMDGSPLFYIRKILETIFTILFAFYLQYHTYYLPSAILMGVAWQQLGWLIHEFAHHQLFKNRYYNDLASYFVGNFLQGFSSGGWKEQHNVHHAATNVVGRDGDLDLVPFYATVAEHLNNYSQDSWVMTLFRWQHVHWTFMLPFLRLSWLLQSIIFVSQMPTHYYDYYRNTAIYEQVGLSLHWAWSLGQLYFLPDWSTRIMFFLVSHLVGGFLLSHVVTFNHYSVEKFALSSNIMSNYACLQIMTTRNMRPGRFIDWLWGGLNYQIEHHLFPTMPRHNLNTVMPLVKEFAAANGLPYMVDDYFTGFWLEIEQFRNIANVAAKLTKKIA.

The region spanning 1 to 80 (MVLREQEHEP…TQEPEIPDIK (80 aa)) is the Cytochrome b5 heme-binding domain. The next 4 membrane-spanning stretches (helical) occupy residues 137–157 (IFTILFAFYLQYHTYYLPSAI), 257–277 (WTFMLPFLRLSWLLQSIIFVS), 292–312 (IYEQVGLSLHWAWSLGQLYFL), and 319–339 (IMFFLVSHLVGGFLLSHVVTF).

The protein belongs to the fatty acid desaturase type 1 family.

The protein resides in the membrane. The catalysed reaction is (11Z,14Z)-eicosadienoyl-CoA + 2 Fe(II)-[cytochrome b5] + O2 + 2 H(+) = (5Z,11Z,14Z)-eicosatrienoyl-CoA + 2 Fe(III)-[cytochrome b5] + 2 H2O. It carries out the reaction (11Z,14Z,17Z)-eicosatrienoyl-CoA + 2 Fe(II)-[cytochrome b5] + O2 + 2 H(+) = (5Z,11Z,14Z,17Z)-eicosatetraenoyl-CoA + 2 Fe(III)-[cytochrome b5] + 2 H2O. The enzyme catalyses (8Z,11Z,14Z,17Z)-eicosatetraenoyl-CoA + 2 Fe(II)-[cytochrome b5] + O2 + 2 H(+) = (5Z,8Z,11Z,14Z,17Z)-eicosapentaenoyl-CoA + 2 Fe(III)-[cytochrome b5] + 2 H2O. It catalyses the reaction (8Z,11Z,14Z)-eicosatrienoyl-CoA + 2 Fe(II)-[cytochrome b5] + O2 + 2 H(+) = (5Z,8Z,11Z,14Z)-eicosatetraenoyl-CoA + 2 Fe(III)-[cytochrome b5] + 2 H2O. It functions in the pathway lipid metabolism; polyunsaturated fatty acid biosynthesis. Its function is as follows. Can function as a Delta(5) fatty acid desaturase and behaves as a (8-3) desaturase. Introduces a double bond in the fatty acid chain 5 carbons away from carboxy terminal to biosynthesize polyunsaturated fatty acids (PUFAs) endogenously (PUFAs are essential for membrane structure and many cellular and physiological processes). Acts on a variety of substrates such as dihomo-gamma-linoleoyl-CoA ((8Z,11Z,14Z)-eicosatrienoyl-CoA, 20:3n-6) to generate arachidonoyl-CoA ((5Z,8Z,11Z,14Z)-eicosatetraenoyl-CoA, 20:4n-6). Also acts on a number of other substrates, including fatty acids that do not contain a double bond at the 8 position like (11Z,14Z,17Z)-eicosatrienoyl-CoA (20:3n-3) to produce (5Z,11Z,14Z,17Z)-eicosatetraenoyl-CoA (20:4n-3). Unlike plants, Caenorhabditis elegans desaturases seem to use fatty acyl-CoAs as substrates. The protein is Delta(5) fatty acid desaturase fat-4 (fat-4) of Caenorhabditis elegans.